The following is a 490-amino-acid chain: tRNA-guanine(15) transglycosylase (490 aa).

Aspartate 90 functions as the Nucleophile in the catalytic mechanism. Substrate is bound by residues aspartate 125 and alanine 193. Zn(2+) contacts are provided by cysteine 276, cysteine 278, and cysteine 281.

Belongs to the archaeosine tRNA-ribosyltransferase family. Zn(2+) serves as cofactor.

The enzyme catalyses guanosine(15) in tRNA + 7-cyano-7-deazaguanine = 7-cyano-7-carbaguanosine(15) in tRNA + guanine. It participates in tRNA modification; archaeosine-tRNA biosynthesis. Exchanges the guanine residue with 7-cyano-7-deazaguanine (preQ0) at position 15 in the dihydrouridine loop (D-loop) of archaeal tRNAs. This chain is tRNA-guanine(15) transglycosylase, found in Methanosarcina barkeri (strain Fusaro / DSM 804).